A 507-amino-acid chain; its full sequence is ATP synthase subunit alpha, chloroplastic (507 aa).

Residue 170-177 coordinates ATP; it reads GDRQTGKA.

The protein belongs to the ATPase alpha/beta chains family. In terms of assembly, F-type ATPases have 2 components, CF(1) - the catalytic core - and CF(0) - the membrane proton channel. CF(1) has five subunits: alpha(3), beta(3), gamma(1), delta(1), epsilon(1). CF(0) has four main subunits: a, b, b' and c.

Its subcellular location is the plastid. It localises to the chloroplast thylakoid membrane. The catalysed reaction is ATP + H2O + 4 H(+)(in) = ADP + phosphate + 5 H(+)(out). In terms of biological role, produces ATP from ADP in the presence of a proton gradient across the membrane. The alpha chain is a regulatory subunit. This is ATP synthase subunit alpha, chloroplastic from Calycanthus floridus var. glaucus (Eastern sweetshrub).